Here is a 251-residue protein sequence, read N- to C-terminus: Adenosylcobinamide-GDP ribazoletransferase (251 aa).

5 helical membrane-spanning segments follow: residues 44–64, 114–134, 143–163, 177–197, and 198–218; these read LVGLLAGLVCAGPFLLGLLAG, IGAFGVLGIVFGVLGQVVLAH, GALVWAPVLGRAACVVLAACV, AGATHMTVLFCAGVTAATGVA, and LAGPPAVLAAALPCACAVVWL.

Belongs to the CobS family. The cofactor is Mg(2+).

Its subcellular location is the cell inner membrane. The enzyme catalyses alpha-ribazole + adenosylcob(III)inamide-GDP = adenosylcob(III)alamin + GMP + H(+). It carries out the reaction alpha-ribazole 5'-phosphate + adenosylcob(III)inamide-GDP = adenosylcob(III)alamin 5'-phosphate + GMP + H(+). It functions in the pathway cofactor biosynthesis; adenosylcobalamin biosynthesis; adenosylcobalamin from cob(II)yrinate a,c-diamide: step 7/7. Joins adenosylcobinamide-GDP and alpha-ribazole to generate adenosylcobalamin (Ado-cobalamin). Also synthesizes adenosylcobalamin 5'-phosphate from adenosylcobinamide-GDP and alpha-ribazole 5'-phosphate. The sequence is that of Adenosylcobinamide-GDP ribazoletransferase from Nitratidesulfovibrio vulgaris (strain DSM 19637 / Miyazaki F) (Desulfovibrio vulgaris).